Here is a 627-residue protein sequence, read N- to C-terminus: (R)-linalool synthase 1, chloroplastic (627 aa).

The transit peptide at Met-1 to Ser-21 directs the protein to the chloroplast. Positions 378, 382, and 530 each coordinate Mg(2+). The DDXXD motif signature appears at Asp-378 to Asp-382.

It belongs to the terpene synthase family. Tpsd subfamily. Requires Mg(2+) as cofactor. The cofactor is Mn(2+).

It localises to the plastid. The protein resides in the chloroplast. The catalysed reaction is (2E)-geranyl diphosphate + H2O = (R)-linalool + diphosphate. The protein operates within terpene metabolism; oleoresin biosynthesis. Functionally, terpene synthase (TPS) involved in the biosynthesis of monoterpene natural products included in conifer oleoresin secretions and volatile emissions; these compounds contribute to biotic and abiotic stress defense against herbivores and pathogens. Catalyzes the conversion of (2E)-geranyl diphosphate (GPP) to (R)-linalool. The chain is (R)-linalool synthase 1, chloroplastic from Picea sitchensis (Sitka spruce).